An 89-amino-acid chain; its full sequence is Small ribosomal subunit protein uS15 (89 aa).

It belongs to the universal ribosomal protein uS15 family. As to quaternary structure, part of the 30S ribosomal subunit. Forms a bridge to the 50S subunit in the 70S ribosome, contacting the 23S rRNA.

Its function is as follows. One of the primary rRNA binding proteins, it binds directly to 16S rRNA where it helps nucleate assembly of the platform of the 30S subunit by binding and bridging several RNA helices of the 16S rRNA. Functionally, forms an intersubunit bridge (bridge B4) with the 23S rRNA of the 50S subunit in the ribosome. This Polynucleobacter asymbioticus (strain DSM 18221 / CIP 109841 / QLW-P1DMWA-1) (Polynucleobacter necessarius subsp. asymbioticus) protein is Small ribosomal subunit protein uS15.